The sequence spans 606 residues: Dihydroxy-acid dehydratase ilvC, mitochondrial (606 aa).

Residue Cys84 participates in [2Fe-2S] cluster binding. Asp116 serves as a coordination point for Mg(2+). Residue Cys157 coordinates [2Fe-2S] cluster. Asp158 contacts Mg(2+). Residue Cys232 participates in [2Fe-2S] cluster binding. Glu485 contacts Mg(2+). Ser511 serves as the catalytic Proton acceptor.

This sequence belongs to the IlvD/Edd family. Requires [2Fe-2S] cluster as cofactor. It depends on Mg(2+) as a cofactor.

It is found in the mitochondrion. It catalyses the reaction (2R)-2,3-dihydroxy-3-methylbutanoate = 3-methyl-2-oxobutanoate + H2O. The enzyme catalyses (2R,3R)-2,3-dihydroxy-3-methylpentanoate = (S)-3-methyl-2-oxopentanoate + H2O. It functions in the pathway amino-acid biosynthesis; L-isoleucine biosynthesis; L-isoleucine from 2-oxobutanoate: step 3/4. It participates in amino-acid biosynthesis; L-valine biosynthesis; L-valine from pyruvate: step 3/4. With respect to regulation, DHAD activity is inhibited in dose-dependent manner by 2-hydroxy-3-methylbutyric acid with an IC(50) of about 8 mM. In terms of biological role, dihydroxyacid dehydratase that catalyzes the third step in the common pathway leading to biosynthesis of branched-chain amino acids. Catalyzes the dehydration of (2R,3R)-2,3-dihydroxy-3-methylpentanoate (2,3-dihydroxy-3-methylvalerate) into 2-oxo-3-methylpentanoate (2-oxo-3-methylvalerate) and of (2R)-2,3-dihydroxy-3-methylbutanoate (2,3-dihydroxyisovalerate) into 2-oxo-3-methylbutanoate (2-oxoisovalerate), the penultimate precursor to L-isoleucine and L-valine, respectively. IlvC and the branched-chain amino acid biosynthesis are crucial for virulence and may be a potential target to develop antifungal agents. In Aspergillus fumigatus (strain ATCC MYA-4609 / CBS 101355 / FGSC A1100 / Af293) (Neosartorya fumigata), this protein is Dihydroxy-acid dehydratase ilvC, mitochondrial.